A 202-amino-acid polypeptide reads, in one-letter code: ATP-dependent Clp protease proteolytic subunit (202 aa).

S107 acts as the Nucleophile in catalysis. The active site involves H132.

It belongs to the peptidase S14 family. In terms of assembly, fourteen ClpP subunits assemble into 2 heptameric rings which stack back to back to give a disk-like structure with a central cavity, resembling the structure of eukaryotic proteasomes.

It is found in the cytoplasm. The catalysed reaction is Hydrolysis of proteins to small peptides in the presence of ATP and magnesium. alpha-casein is the usual test substrate. In the absence of ATP, only oligopeptides shorter than five residues are hydrolyzed (such as succinyl-Leu-Tyr-|-NHMec, and Leu-Tyr-Leu-|-Tyr-Trp, in which cleavage of the -Tyr-|-Leu- and -Tyr-|-Trp bonds also occurs).. Its function is as follows. Cleaves peptides in various proteins in a process that requires ATP hydrolysis. Has a chymotrypsin-like activity. Plays a major role in the degradation of misfolded proteins. The sequence is that of ATP-dependent Clp protease proteolytic subunit from Shewanella amazonensis (strain ATCC BAA-1098 / SB2B).